The primary structure comprises 657 residues: Translation factor GUF1, mitochondrial (657 aa).

The transit peptide at 1–39 (MRGCLQSVKWLTSALRPSQSLASSTRYPRRLLSTSAPRN) directs the protein to the mitochondrion. Residues 59–239 (ERFRNFCIVA…TVIEQIPAPV (181 aa)) form the tr-type G domain. Residues 68–75 (AHVDHGKS), 132–136 (DTPGH), and 186–189 (NKVD) each bind GTP.

The protein belongs to the TRAFAC class translation factor GTPase superfamily. Classic translation factor GTPase family. LepA subfamily.

The protein localises to the mitochondrion inner membrane. It carries out the reaction GTP + H2O = GDP + phosphate + H(+). In terms of biological role, promotes mitochondrial protein synthesis. May act as a fidelity factor of the translation reaction, by catalyzing a one-codon backward translocation of tRNAs on improperly translocated ribosomes. Binds to mitochondrial ribosomes in a GTP-dependent manner. The chain is Translation factor GUF1, mitochondrial from Ajellomyces capsulatus (strain G186AR / H82 / ATCC MYA-2454 / RMSCC 2432) (Darling's disease fungus).